The primary structure comprises 401 residues: Rab-interacting lysosomal protein (401 aa).

The RH1 domain maps to 11-101 (PGWGSREAAG…REENERLRRE (91 aa)). A coiled-coil region spans residues 75-181 (DSLQVSAQPA…AQDRERERQQ (107 aa)). Disordered regions lie at residues 167-239 (TQLR…SEAG) and 304-388 (KMLG…SALH). Residues 172-181 (AQDRERERQQ) are compositionally biased toward basic and acidic residues. The RH2 domain occupies 240-316 (QCRFSREEFE…GTPEEAESSE (77 aa)). The tract at residues 272–333 (FQRELLTDHR…LLSDDKGDHP (62 aa)) is necessary for interaction with RAB7A and RAB34, lysosomal distribution and morphology. Threonine 308 carries the phosphothreonine modification. The segment covering 310–319 (EEAESSEDEA) has biased composition (acidic residues). A phosphoserine mark is found at serine 314 and serine 315.

Homodimer. Interacts with RAB7A. Interacts with RAB34. Identified in a complex with MREG and DCTN1; interacts directly with MREG. Interacts with CLN3. Interacts with FLCN; the interaction is direct and promotes association between RILP and RAB34. In terms of tissue distribution, ubiquitous. Strongly expressed in fetal heart, heart, stomach, spleen, adrenal gland, thyroid gland, salivary gland, fetal liver, liver and lung. Poorly expressed in brain.

Its subcellular location is the late endosome membrane. It localises to the lysosome membrane. The protein localises to the cytoplasmic vesicle. The protein resides in the phagosome membrane. Rab effector playing a role in late endocytic transport to degradative compartments. Involved in the regulation of lysosomal morphology and distribution. Induces recruitment of dynein-dynactin motor complexes to Rab7A-containing late endosome and lysosome compartments. Promotes centripetal migration of phagosomes and the fusion of phagosomes with the late endosomes and lysosomes. This chain is Rab-interacting lysosomal protein (RILP), found in Homo sapiens (Human).